The chain runs to 578 residues: Zinc finger protein with KRAB and SCAN domains 8 (578 aa).

The tract at residues 1-20 (MAEESRKPSAPSPPDQTPEE) is disordered. Ser-12 carries the post-translational modification Phosphoserine. Residue Lys-26 forms a Glycyl lysine isopeptide (Lys-Gly) (interchain with G-Cter in SUMO2) linkage. An SCAN box domain is found at 51–133 (RLRFRQLCYQ…TLLEDLERQI (83 aa)). The disordered stretch occupies residues 158–205 (ASAPEPPNTQLQSEATQHKSPVPQESQERAMSTSQSPTRSQKGSSGDQ). A compositionally biased stretch (polar residues) spans 165–205 (NTQLQSEATQHKSPVPQESQERAMSTSQSPTRSQKGSSGDQ). Residues Lys-176 and Lys-199 each participate in a glycyl lysine isopeptide (Lys-Gly) (interchain with G-Cter in SUMO2) cross-link. Residue Ser-201 is modified to Phosphoserine. The KRAB domain occupies 220–316 (EKIEDMAVSL…GRLERQRGNP (97 aa)). Residues Lys-221, Lys-272, and Lys-288 each participate in a glycyl lysine isopeptide (Lys-Gly) (interchain with G-Cter in SUMO2) cross-link. C2H2-type zinc fingers lie at residues 322-344 (HKCD…WRIH) and 350-372 (YQCN…QDIH). Glycyl lysine isopeptide (Lys-Gly) (interchain with G-Cter in SUMO2) cross-links involve residues Lys-374 and Lys-376. 7 C2H2-type zinc fingers span residues 378–400 (YHCK…QRIH), 406–428 (YQCN…QRIH), 434–456 (YECN…QRIH), 462–484 (YECD…QRSH), 490–512 (YKCN…QRIH), 518–540 (YKCK…LRIH), and 546–568 (YQCN…QRIH). Glycyl lysine isopeptide (Lys-Gly) (interchain with G-Cter in SUMO2) cross-links involve residues Lys-413 and Lys-441. Residue Lys-502 forms a Glycyl lysine isopeptide (Lys-Gly) (interchain with G-Cter in SUMO2) linkage. Residue Lys-572 forms a Glycyl lysine isopeptide (Lys-Gly) (interchain with G-Cter in SUMO2) linkage.

Belongs to the krueppel C2H2-type zinc-finger protein family.

It localises to the nucleus. Functionally, may be involved in transcriptional regulation. The sequence is that of Zinc finger protein with KRAB and SCAN domains 8 (ZKSCAN8) from Pan troglodytes (Chimpanzee).